We begin with the raw amino-acid sequence, 259 residues long: Protein unc-50 homolog (259 aa).

An N-acetylmethionine modification is found at methionine 1. Over 1 to 82 (MLPSTSVNSL…TKDQWARDDP (82 aa)) the chain is Cytoplasmic. Serine 6 carries the post-translational modification Phosphoserine. A helical membrane pass occupies residues 83 to 103 (AFLVLLSIWLCVSTIGFGFVL). Residues 104–115 (DMGFFETIKLLL) lie on the Lumenal side of the membrane. The helical transmembrane segment at 116-136 (WVVLIDCVGVGLLIATLMWFI) threads the bilayer. The Cytoplasmic segment spans residues 137–163 (SNKYLVKRQSRDYDVEWGYAFDVHLNA). The chain crosses the membrane as a helical span at residues 164-184 (FYPLLVILHFIQLFFINHVIL). The Lumenal portion of the chain corresponds to 185–187 (TDT). A helical transmembrane segment spans residues 188 to 208 (FIGYLVGNTLWLVAVGYYIYV). The Cytoplasmic segment spans residues 209 to 222 (TFLGYSALPFLKNT). A helical membrane pass occupies residues 223-243 (VILLYPFAPLILLYGLSLALG). The Lumenal segment spans residues 244–259 (WNFTHTLCSFYKYRVK).

This sequence belongs to the unc-50 family. Present in periodontal ligament fibroblasts (at protein level).

The protein localises to the nucleus inner membrane. It is found in the golgi apparatus membrane. Its function is as follows. Involved in the cell surface expression of neuronal nicotinic receptors. Binds RNA. This Homo sapiens (Human) protein is Protein unc-50 homolog (UNC50).